The chain runs to 756 residues: Hormone-sensitive lipase (756 aa).

Residues 350 to 352 carry the Involved in the stabilization of the negatively charged intermediate by the formation of the oxyanion hole motif; it reads HGG. Residue Ser424 is part of the active site. Disordered stretches follow at residues 542–570 and 581–600; these read SVSK…TDSL and RNSS…ETLG. Ser552 is subject to Phosphoserine; by PKA. A Phosphoserine; by AMPK modification is found at Ser554. The segment covering 581 to 596 has biased composition (polar residues); that stretch reads RNSSDTTDTPELSLSA. Ser595 and Ser649 each carry phosphoserine. Catalysis depends on residues Asp692 and His722.

This sequence belongs to the 'GDXG' lipolytic enzyme family. Monomer and homodimer. Interacts with CAVIN1 in the adipocyte cytoplasm. Interacts with PLIN5. In terms of processing, phosphorylation by AMPK reduces its translocation towards the lipid droplets.

Its subcellular location is the cell membrane. It localises to the membrane. The protein resides in the caveola. The protein localises to the cytoplasm. It is found in the cytosol. Its subcellular location is the lipid droplet. It catalyses the reaction a diacylglycerol + H2O = a monoacylglycerol + a fatty acid + H(+). The catalysed reaction is a triacylglycerol + H2O = a diacylglycerol + a fatty acid + H(+). It carries out the reaction a monoacylglycerol + H2O = glycerol + a fatty acid + H(+). The enzyme catalyses Hydrolyzes glycerol monoesters of long-chain fatty acids.. It catalyses the reaction 1,2-di-(9Z-octadecenoyl)-glycerol + (9Z)-octadecenoate + H(+) = 1,2,3-tri-(9Z-octadecenoyl)-glycerol + H2O. The catalysed reaction is 2,3-di-(9Z)-octadecenoyl-sn-glycerol + H2O = 2-(9Z-octadecenoyl)-glycerol + (9Z)-octadecenoate + H(+). It carries out the reaction cholesteryl (9Z-octadecenoate) + H2O = cholesterol + (9Z)-octadecenoate + H(+). The enzyme catalyses 1,2,3-tri-(9Z-octadecenoyl)-glycerol + H2O = di-(9Z)-octadecenoylglycerol + (9Z)-octadecenoate + H(+). It catalyses the reaction all-trans-retinyl hexadecanoate + H2O = all-trans-retinol + hexadecanoate + H(+). The catalysed reaction is 1,2-di-(9Z-octadecenoyl)-glycerol + H2O = (9Z-octadecenoyl)-glycerol + (9Z)-octadecenoate + H(+). It carries out the reaction 2-(5Z,8Z,11Z,14Z-eicosatetraenoyl)-glycerol + H2O = glycerol + (5Z,8Z,11Z,14Z)-eicosatetraenoate + H(+). The enzyme catalyses 1-(9Z-octadecenoyl)-glycerol + H2O = glycerol + (9Z)-octadecenoate + H(+). It catalyses the reaction 2-(9Z-octadecenoyl)-glycerol + H2O = glycerol + (9Z)-octadecenoate + H(+). The catalysed reaction is 1-O-hexadecyl-2-acetyl-sn-glycerol + H2O = 1-O-hexadecyl-sn-glycerol + acetate + H(+). It carries out the reaction 1,2-di-(9Z-octadecenoyl)-sn-glycerol + H2O = (9Z-octadecenoyl)-glycerol + (9Z)-octadecenoate + H(+). The enzyme catalyses 1,3-di-(9Z-octadecenoyl)-glycerol + H2O = 1-(9Z-octadecenoyl)-glycerol + (9Z)-octadecenoate + H(+). It catalyses the reaction 1,2-di-(9Z-octadecenoyl)-glycerol + H2O = 2-(9Z-octadecenoyl)-glycerol + (9Z)-octadecenoate + H(+). The protein operates within glycerolipid metabolism; triacylglycerol degradation. In terms of biological role, lipase with broad substrate specificity, catalyzing the hydrolysis of triacylglycerols (TAGs), diacylglycerols (DAGs), monoacylglycerols (MAGs), cholesteryl esters and retinyl esters. Shows a preferential hydrolysis of DAGs over TAGs and MAGs. Preferentially hydrolyzes fatty acid (FA) esters at the sn-3 position of the glycerol backbone in DAGs and FA esters at the sn-1 and sn-2 positions of the glycerol backbone in TAGs. Catalyzes the hydrolysis of 2-arachidonoylglycerol, an endocannabinoid and of 2-acetyl monoalkylglycerol ether, the penultimate precursor of the pathway for de novo synthesis of platelet-activating factor. In adipose tissue and heart, it primarily hydrolyzes stored triglycerides to free fatty acids, while in steroidogenic tissues, it principally converts cholesteryl esters to free cholesterol for steroid hormone production. The polypeptide is Hormone-sensitive lipase (LIPE) (Bos taurus (Bovine)).